We begin with the raw amino-acid sequence, 221 residues long: Vesicle transport v-SNARE 11 (221 aa).

At serine 2 the chain carries N-acetylserine. Residues 2-198 (SDVFDGYERQ…MTRRMNKNKW (197 aa)) are Cytoplasmic-facing. Residues 32–93 (EQKKQKLSEI…FKTEVKRITS (62 aa)) adopt a coiled-coil conformation. Residues 199-219 (TIGAIIIALIAAIFIILYFKL) form a helical; Anchor for type IV membrane protein membrane-spanning segment. Residues 220–221 (TK) are Vesicular-facing.

Belongs to the VTI1 family. In terms of assembly, forms SNARE complexes with the t-SNAREs SYP51 and either SYP21 or SYP22 in the PVC, and with a much lower affinity with SYP61 in the TGN. Does not interact with SYP41, SYP42 or VPS45. Binds to EPSIN1. Interacts with SCYL2B. Expressed in roots, stems, flowers and leaves.

The protein resides in the golgi apparatus. The protein localises to the trans-Golgi network membrane. It localises to the prevacuolar compartment membrane. Its subcellular location is the vacuole membrane. Its function is as follows. Functions as a v-SNARE responsible for targeting AtELP-containing vesicles from the trans-Golgi network (TGN) to the prevacuolar compartment (PVC) and mediates liposome fusion. May be also involved in retrograde traffic to the cis-Golgi. Promotes the formation of vacuolar membrane 'bulbs'. Necessary to deliver proteins to the lytic vacuole, but seems not involved in storage proteins transport. Required for amyloplast sedimentation in the endodermis during shoot gravitropism, which are thus acting as statoliths. Expression in the endodermis is essential for the shoot gravitropic response, whereas expression in other tissues may be responsible for the correct stem and leaf shape. The protein is Vesicle transport v-SNARE 11 of Arabidopsis thaliana (Mouse-ear cress).